Reading from the N-terminus, the 132-residue chain is Small ribosomal subunit protein uS8 (132 aa).

Belongs to the universal ribosomal protein uS8 family. As to quaternary structure, part of the 30S ribosomal subunit. Contacts proteins S5 and S12.

In terms of biological role, one of the primary rRNA binding proteins, it binds directly to 16S rRNA central domain where it helps coordinate assembly of the platform of the 30S subunit. The chain is Small ribosomal subunit protein uS8 from Limosilactobacillus fermentum (strain NBRC 3956 / LMG 18251) (Lactobacillus fermentum).